Consider the following 194-residue polypeptide: Ras-related protein RabU (194 aa).

19–27 (GYDYECGIK) is a GTP binding site. The Effector region motif lies at 42–50 (PESQVGVDF). Residues 68 to 72 (PQNKY) and 130 to 133 (NNSE) contribute to the GTP site.

Belongs to the small GTPase superfamily. Rab family.

In Dictyostelium discoideum (Social amoeba), this protein is Ras-related protein RabU (rabU).